The sequence spans 228 residues: uncharacterized protein (228 aa).

Disordered stretches follow at residues 1–62 (MQRP…VGRF) and 160–228 (SPRP…LSGV). Over residues 13-33 (AASTRAPPRPSAPQQGRRQPS) the composition is skewed to low complexity. The span at 167 to 176 (RGQQVTQDGP) shows a compositional bias: polar residues.

This is an uncharacterized protein from Homo sapiens (Human).